The chain runs to 353 residues: Quinolinate synthase (353 aa).

Iminosuccinate contacts are provided by His-47 and Ser-68. Cys-113 contributes to the [4Fe-4S] cluster binding site. Residues 139–141 and Ser-156 each bind iminosuccinate; that span reads YAN. [4Fe-4S] cluster is bound at residue Cys-200. Iminosuccinate-binding positions include 226-228 and Thr-243; that span reads HPE. Residue Cys-297 coordinates [4Fe-4S] cluster.

Belongs to the quinolinate synthase family. Type 1 subfamily. Requires [4Fe-4S] cluster as cofactor.

The protein resides in the cytoplasm. It catalyses the reaction iminosuccinate + dihydroxyacetone phosphate = quinolinate + phosphate + 2 H2O + H(+). It functions in the pathway cofactor biosynthesis; NAD(+) biosynthesis; quinolinate from iminoaspartate: step 1/1. In terms of biological role, catalyzes the condensation of iminoaspartate with dihydroxyacetone phosphate to form quinolinate. The polypeptide is Quinolinate synthase (Yersinia pestis bv. Antiqua (strain Nepal516)).